The sequence spans 230 residues: Phosducin-like protein 1 (230 aa).

The residue at position 1 (Met1) is an N-acetylmethionine. Positions 16 to 166 (AEKDKHTTVD…VVGYKNGLEK (151 aa)) constitute a Phosducin domain. A coiled-coil region spans residues 25–79 (DSDDKSSGEENLDELLNELDRELDEDHEFLSAYRSERLQQISDHLKQVKKNVEDD). The tract at residues 81 to 230 (YGRLQCIDNE…RSESDSDLDI (150 aa)) is thioredoxin fold.

Belongs to the phosducin family. As to quaternary structure, interacts with the G protein beta-gamma subunit complex (STE4-STE18 complex).

The protein resides in the cytoplasm. Functionally, not essential for growth. Inhibits early G-protein signaling events following pheromone stimulation. May help create heterodimerizable beta-tubulin by facilitating the efficient transfer of nascent beta-tubulin polypeptides to the folding apparatus. This chain is Phosducin-like protein 1 (PLP1), found in Saccharomyces cerevisiae (strain ATCC 204508 / S288c) (Baker's yeast).